Reading from the N-terminus, the 89-residue chain is Small ribosomal subunit protein uS15 (89 aa).

The protein belongs to the universal ribosomal protein uS15 family. In terms of assembly, part of the 30S ribosomal subunit. Forms a bridge to the 50S subunit in the 70S ribosome, contacting the 23S rRNA.

In terms of biological role, one of the primary rRNA binding proteins, it binds directly to 16S rRNA where it helps nucleate assembly of the platform of the 30S subunit by binding and bridging several RNA helices of the 16S rRNA. Forms an intersubunit bridge (bridge B4) with the 23S rRNA of the 50S subunit in the ribosome. The protein is Small ribosomal subunit protein uS15 of Lysinibacillus sphaericus (strain C3-41).